A 134-amino-acid polypeptide reads, in one-letter code: Phospholipase A2 (134 aa).

Residues tryptophan 8, glycine 10, and glycine 12 each coordinate Ca(2+). Disulfide bonds link cysteine 9-cysteine 31, cysteine 30-cysteine 70, cysteine 37-cysteine 63, cysteine 61-cysteine 95, and cysteine 105-cysteine 113. The N-linked (GlcNAc...) asparagine glycan is linked to asparagine 13. Histidine 34 is an active-site residue. Aspartate 35 is a binding site for Ca(2+). Aspartate 64 is an active-site residue.

The protein belongs to the phospholipase A2 family. Group III subfamily. It depends on Ca(2+) as a cofactor. In terms of tissue distribution, expressed by the venom gland.

It localises to the secreted. The catalysed reaction is a 1,2-diacyl-sn-glycero-3-phosphocholine + H2O = a 1-acyl-sn-glycero-3-phosphocholine + a fatty acid + H(+). In terms of biological role, PLA2 catalyzes the calcium-dependent hydrolysis of the 2-acyl groups in 3-sn-phosphoglycerides. The protein is Phospholipase A2 of Apis cerana cerana (Oriental honeybee).